A 377-amino-acid chain; its full sequence is Enoyl reductase cheB (377 aa).

The segment at 18–361 (GGSLVIARDV…REISAEKLVV (344 aa)) is enoyl reductase (ER) domain. 49–52 (CDFK) is a binding site for NADP(+). A substrate-binding site is contributed by 137–144 (PCCIATMG). NADP(+)-binding positions include 173–176 (SSSV), 200–203 (SPKN), Tyr218, 265–266 (LE), and Thr283. Residue 285-289 (GAIII) participates in substrate binding. 354–355 (IS) lines the NADP(+) pocket.

This sequence belongs to the zinc-containing alcohol dehydrogenase family. Requires heme as cofactor.

It functions in the pathway secondary metabolite biosynthesis. Its function is as follows. Enoyl reductase; part of the gene cluster that mediates the biosynthesis of chaetoglobosin A which has a unique inhibitory activity against actin polymerization in mammalian cells. Chaetoglobosin A and its intermediates are involved in the morphological differentiation of C.globosum. The first step of the pathway is the synthesis of prochaetoglobosin I via condensation of one acetyl-CoA, 8 malonyl-CoA, and a L-tryptophan molecule by the PKS-NRPS hybrid synthetase cheA, followed by reduction of backbone double bond to install desired geometry by the enoyl reductase cheB. Further multiple oxidation steps performed by the cytochrome P450 monooxygenases cheE and cheG, as well as by the FAD-linked oxidoreductase cheF, lead to the formation of chaetoglobosin A. Depending on the order of action of these reductases, distinct intermediates can be identified. Within the pathway, the cytochrome P450 monooxygenase cheE catalyzes a stereospecific epoxidation on prochaetoglobosin I, cytoglobosin D, and chaetoglobosin J intermediates. The FAD-linked oxidoreductase cheF performs dehydrogenation of the C-20 hydroxyl groups in the 20-dihyrochaetoglobosin A and cytoglobosin D intermediates. Finally, the cytochrome P450 monooxygenase cheG can catalyze the stereospecific dihydroxylation of prochaetoglobosin I and prochaetoglobosin IV at C-19 and C-20, respectively. The Diels-Alderase cheD may play a role in the post-PKS-NRPS biosynthetic steps catalyzing Diels-Alder cyclization. The sequence is that of Enoyl reductase cheB from Chaetomium globosum (strain ATCC 6205 / CBS 148.51 / DSM 1962 / NBRC 6347 / NRRL 1970) (Soil fungus).